The sequence spans 64 residues: Large ribosomal subunit protein uL29 (64 aa).

Belongs to the universal ribosomal protein uL29 family.

The protein is Large ribosomal subunit protein uL29 of Nitrosomonas europaea (strain ATCC 19718 / CIP 103999 / KCTC 2705 / NBRC 14298).